The following is a 266-amino-acid chain: CD82 antigen (266 aa).

At 1–11 (MGAGCVKVTKY) the chain is on the cytoplasmic side. The S-palmitoyl cysteine moiety is linked to residue cysteine 5. A helical membrane pass occupies residues 12–32 (FLFLFNLLFFILGAVILGFGV). Over 33-53 (WILADKNSFISVLQTSSSSLQ) the chain is Extracellular. A helical membrane pass occupies residues 54-72 (VGAYVFIGVGAITIVMGFL). Residues 73–83 (GCIGAVNEVRC) lie on the Cytoplasmic side of the membrane. Cysteine 74 carries S-palmitoyl cysteine lipidation. Residues 84–110 (LLGLYFVFLLLILIAQVTVGVLFYFNA) form a helical membrane-spanning segment. Topologically, residues 111–227 (DKLKKEMGNT…KAQAWLQENF (117 aa)) are extracellular. N-linked (GlcNAc...) asparagine glycans are attached at residues asparagine 127, asparagine 131, asparagine 157, and asparagine 197. The helical transmembrane segment at 228 to 249 (GILLGVCAGVAVIELLGLFLSI) threads the bilayer. Topologically, residues 250–266 (CLCRYIHSEDYSKVPKY) are cytoplasmic.

Belongs to the tetraspanin (TM4SF) family. Forms homooligomers. Interacts directly with IGSF8. Interacts with EGFR. Interacts with VEGFA and PDGFA. Interacts with ITGA4. Interacts with ITGA6; this interaction reduces ITGA6 cell surface expression. Interacts with ITGB1. Interacts with TLR4; this interaction inhibits TLR4-mediated signaling pathway. Interacts with TLR9. Interacts with PLAUR. Post-translationally, palmitoylated. Palmitoylation contributes to oligomerization and surface expression. Highest expression in the spleen and the kidney. Low expression in skeletal muscle and in the heart.

It is found in the cell membrane. The protein localises to the cytoplasmic vesicle. It localises to the phagosome. In terms of biological role, structural component of specialized membrane microdomains known as tetraspanin-enriched microdomains (TERMs), which act as platforms for receptor clustering and signaling. Participates thereby in diverse biological functions such as cell signal transduction, adhesion, migration and protein trafficking. Acts as a attenuator of EGF signaling, facilitating ligand-induced endocytosis of the receptor and its subsequent desensitization. Mechanistically, modulates ligand-induced ubiquitination and trafficking of EGFR via E3 ligase CBL phosphorylation by PKC. Increases cell-matrix adhesion by regulating the membrane organization of integrin alpha4/ITA4. Modulates adhesion and suppresses cell migration through other integrins such as the alpha6/ITGA6 and beta1/ITGB1. Decreases cell-associated plasminogen activation by interfering with the interaction between urokinase-type plasminogen activator/PLAU and its receptor PLAUR. Associates with CD4 or CD8 and delivers costimulatory signals for the TCR/CD3 pathway. Plays a role in the restrains phagocyte migration but supports macrophage activation. Plays a role in TLR9 trafficking to acidified CpG-containing compartments by controlling interaction between TLR9 and VAMP3 and subsequent myddosome assembly. Inhibits LPS-induced inflammatory response by preventing binding of LPS to TLR4 on the cell surface. Plays a role in the activation of macrophages into anti-inflammatory phenotypes. Independently of Toll-like receptor (TLR) signaling, is recruited to pathogen-containing phagosomes prior to fusion with lysosomes and participates in antigen presentation. Also acts to control angiogenesis and switch angiogenic milieu to quiescent state by binding and sequestering VEGFA and PDGFA to inhibit the signaling they trigger via their respective cell surface receptor. This is CD82 antigen (Cd82) from Mus musculus (Mouse).